Reading from the N-terminus, the 183-residue chain is uncharacterized protein (183 aa).

A run of 4 helical transmembrane segments spans residues 26–48 (FVAI…IIFY), 72–91 (LLVR…KVFI), 104–121 (IIEA…LIVF), and 125–147 (FTFW…YVLL).

The protein resides in the cell membrane. This is an uncharacterized protein from Aquifex aeolicus (strain VF5).